We begin with the raw amino-acid sequence, 116 residues long: Tyrosine-protein phosphatase 20 (116 aa).

One can recognise a Tyrosine-protein phosphatase domain in the interval 1-116 (WMMIVEQKCR…EIGGDAPMVV (116 aa)). Asp-84 is a binding site for substrate.

This sequence belongs to the protein-tyrosine phosphatase family.

The catalysed reaction is O-phospho-L-tyrosyl-[protein] + H2O = L-tyrosyl-[protein] + phosphate. The chain is Tyrosine-protein phosphatase 20 (STY-20) from Styela plicata (Wrinkled sea squirt).